The following is a 665-amino-acid chain: RNA-directed RNA polymerase (665 aa).

The RdRp catalytic domain maps to 310–485 (NKEEKVKEWS…LKEGKVNPSP (176 aa)). Positions 454, 491, and 495 each coordinate Mg(2+).

In terms of assembly, part of the packaging complex composed of RDRP, P4 and P7. Interacts with P7. Mg(2+) serves as cofactor. Mn(2+) is required as a cofactor.

It is found in the virion. It carries out the reaction RNA(n) + a ribonucleoside 5'-triphosphate = RNA(n+1) + diphosphate. Its function is as follows. Rna-dependent RNA polymerase part of the packaging complex that packages the viral RNA segments, replicate them into a double-stranded form and transcribe them. This is RNA-directed RNA polymerase (P2) from Pseudomonas phage phi6 (Bacteriophage phi-6).